The primary structure comprises 237 residues: Orotate phosphoribosyltransferase (237 aa).

Lys29 is a binding site for 5-phospho-alpha-D-ribose 1-diphosphate. 37–38 (FF) contacts orotate. 5-phospho-alpha-D-ribose 1-diphosphate contacts are provided by residues 79–80 (YK), Arg105, Lys106, Lys109, His111, and 130–138 (DDVMSAGTA). Positions 134 and 162 each coordinate orotate.

Belongs to the purine/pyrimidine phosphoribosyltransferase family. PyrE subfamily. As to quaternary structure, homodimer. Mg(2+) serves as cofactor.

It catalyses the reaction orotidine 5'-phosphate + diphosphate = orotate + 5-phospho-alpha-D-ribose 1-diphosphate. The protein operates within pyrimidine metabolism; UMP biosynthesis via de novo pathway; UMP from orotate: step 1/2. Catalyzes the transfer of a ribosyl phosphate group from 5-phosphoribose 1-diphosphate to orotate, leading to the formation of orotidine monophosphate (OMP). This Polaromonas naphthalenivorans (strain CJ2) protein is Orotate phosphoribosyltransferase.